Reading from the N-terminus, the 742-residue chain is Collectin-12 (742 aa).

The Cytoplasmic segment spans residues 1–37 (MKDDFAEEEEVQSFGYKRFGIQEGTQCTKCKNNWALK). Residues 38 to 58 (FSIILLYILCALLTITVAILG) traverse the membrane as a helical; Signal-anchor for type II membrane protein segment. The Extracellular portion of the chain corresponds to 59–742 (YKVVEKMDNV…DRETVLSSAL (684 aa)). N67 is a glycosylation site (N-linked (GlcNAc...) asparagine). Positions 73–141 (ETSRQTYDDK…NKDTLEKLQA (69 aa)) form a coiled coil. N-linked (GlcNAc...) asparagine glycans are attached at residues N159, N168, and N271. A coiled-coil region spans residues 215–328 (QQRNLITNLQ…KDAENRTAIK (114 aa)). The disordered stretch occupies residues 439-608 (TILQGPPGPR…TPAPEDNGCP (170 aa)). Collagen-like domains follow at residues 443–472 (GPPG…KGEK), 473–529 (GEPG…PGPP), and 530–589 (GPPG…SGAV). Composition is skewed to low complexity over residues 502–525 (KGSQ…SSGD) and 534–556 (KEGL…VGEP). The span at 571–585 (PGMPGPKGPPGPPGP) shows a compositional bias: pro residues. Cystine bridges form between C607-C618, C635-C730, and C708-C722. Residues 614-731 (FTDKCYYFSV…CEDVNNFICE (118 aa)) enclose the C-type lectin domain. Positions 644, 646, 650, 670, and 674 each coordinate Ca(2+). A carbohydrate is bound by residues K691, Q694, and D696. Ca(2+) contacts are provided by Q694, D696, N697, E706, D707, N718, D719, and E731. E706 is a binding site for a carbohydrate. A carbohydrate contacts are provided by N718 and D719.

The extracellular domain forms a stable trimer. The extracellular domain interacts with fibrillar amyloid-beta peptide. Expressed in perivascular macrophages. Expressed in plaques-surrounding reactive astrocytes and in perivascular astrocytes associated with cerebral amyloid angiopathy (CAA) in the temporal cortex of Alzheimer patient (at protein level). Strongly expressed in placenta. Moderately expressed in heart, skeletal muscle, small intestine and lung. Weakly expressed in brain, colon, thymus and kidney. Expressed in nurse-like cells. Expressed in reactive astrocytes and vascular/perivascular cells in the brain of Alzheimer patient.

The protein resides in the membrane. Scavenger receptor that displays several functions associated with host defense. Promotes binding and phagocytosis of Gram-positive, Gram-negative bacteria and yeast. Mediates the recognition, internalization and degradation of oxidatively modified low density lipoprotein (oxLDL) by vascular endothelial cells. Binds to several carbohydrates including Gal-type ligands, D-galactose, L- and D-fucose, GalNAc, T and Tn antigens in a calcium-dependent manner and internalizes specifically GalNAc in nurse-like cells. Also binds to sialyl Lewis X or a trisaccharide and asialo-orosomucoid (ASOR). May also play a role in the clearance of amyloid-beta in Alzheimer disease. In Homo sapiens (Human), this protein is Collectin-12 (COLEC12).